The primary structure comprises 274 residues: MAVIKMKPTSPGQRGAVKISRDHLFKGAPHAPLLEPQFQKAGRNNNGHITIRHRGGGAKHHYRVVDFVRNKDGIPAKVERIEYDPNRTAHIALVCYADGERRYIIAPRGLEAGATLLSGSEAPIRAGNTLPIRNIPVGSTIHCIELQPGKGAQIARSAGTSATLLAREGVYAQVRMRSGEVRRIHIECRATIGEVANEEHSLRQLGKAGVKRHMGIRPTVRGVVMNPVDHPHGGGEGKTGEGRHPVDPWGNLTKGYRTRNNKRTQVFIVSRRKK.

Residues 223-256 form a disordered region; that stretch reads VVMNPVDHPHGGGEGKTGEGRHPVDPWGNLTKGY. The segment covering 229-246 has biased composition (basic and acidic residues); that stretch reads DHPHGGGEGKTGEGRHPV.

Belongs to the universal ribosomal protein uL2 family. As to quaternary structure, part of the 50S ribosomal subunit. Forms a bridge to the 30S subunit in the 70S ribosome.

One of the primary rRNA binding proteins. Required for association of the 30S and 50S subunits to form the 70S ribosome, for tRNA binding and peptide bond formation. It has been suggested to have peptidyltransferase activity; this is somewhat controversial. Makes several contacts with the 16S rRNA in the 70S ribosome. This is Large ribosomal subunit protein uL2 from Variovorax paradoxus (strain S110).